Consider the following 749-residue polypeptide: Transcription factor RFX3 (749 aa).

The segment at residues 183-258 (HLQWLLDNYE…YHYYGIRVKP (76 aa)) is a DNA-binding region (RFX-type winged-helix).

This sequence belongs to the RFX family.

The protein localises to the nucleus. In terms of biological role, transcription factor required for ciliogenesis and islet cell differentiation during endocrine pancreas development. The sequence is that of Transcription factor RFX3 (rfx3) from Xenopus tropicalis (Western clawed frog).